The chain runs to 538 residues: Sterol esterase 2 (538 aa).

The Cytoplasmic portion of the chain corresponds to 1–11 (MVNKVVDEVQR). A helical; Signal-anchor for type II membrane protein transmembrane segment spans residues 12–32 (LVSAIILTSFMTGLFILSLWK). Residues 33–538 (NYVTVHFQHK…IENLRFPNAR (506 aa)) are Lumenal-facing. The interval 42 to 87 (KNDPRDTRSSRTKIQPNDKKKKRPARHSRPLSISSTTPLDLQRDQE) is disordered. Over residues 60-70 (KKKKRPARHSR) the composition is skewed to basic residues. Residues S73 and S107 each carry the phosphoserine modification. Residue S287 is the Nucleophile of the active site. Catalysis depends on charge relay system residues D480 and H511.

This sequence belongs to the AB hydrolase superfamily. Not glycosylated.

The protein resides in the cell membrane. It carries out the reaction a sterol ester + H2O = a sterol + a fatty acid + H(+). In terms of biological role, mediates the hydrolysis of steryl esters. Required for mobilization of steryl ester, thereby playing a central role in lipid metabolism. The sequence is that of Sterol esterase 2 (YEH2) from Saccharomyces cerevisiae (strain ATCC 204508 / S288c) (Baker's yeast).